Consider the following 417-residue polypeptide: Type II methyltransferase M.Eco47II (417 aa).

The region spanning 81 to 414 is the SAM-dependent MTase C5-type domain; that stretch reads YTVLELFAGA…KSVVHLLDKI (334 aa). Cys-153 is an active-site residue.

This sequence belongs to the class I-like SAM-binding methyltransferase superfamily. C5-methyltransferase family.

It carries out the reaction a 2'-deoxycytidine in DNA + S-adenosyl-L-methionine = a 5-methyl-2'-deoxycytidine in DNA + S-adenosyl-L-homocysteine + H(+). In terms of biological role, a methylase that recognizes the double-stranded sequence 5'-GGNCC-3', methylates C-? on both strands, and protects the DNA from cleavage by both the Eco47I and Eco47II endonucleases. This chain is Type II methyltransferase M.Eco47II, found in Escherichia coli.